The sequence spans 157 residues: 2-C-methyl-D-erythritol 2,4-cyclodiphosphate synthase (157 aa).

D8 and H10 together coordinate a divalent metal cation. 4-CDP-2-C-methyl-D-erythritol 2-phosphate-binding positions include 8–10 (DVH) and 34–35 (HS). H42 contributes to the a divalent metal cation binding site. 4-CDP-2-C-methyl-D-erythritol 2-phosphate contacts are provided by residues 56 to 58 (DIG), 61 to 65 (FPDTD), 100 to 106 (AQAPKMA), 132 to 135 (TTTE), F139, and R142.

It belongs to the IspF family. As to quaternary structure, homotrimer. A divalent metal cation is required as a cofactor.

The enzyme catalyses 4-CDP-2-C-methyl-D-erythritol 2-phosphate = 2-C-methyl-D-erythritol 2,4-cyclic diphosphate + CMP. Its pathway is isoprenoid biosynthesis; isopentenyl diphosphate biosynthesis via DXP pathway; isopentenyl diphosphate from 1-deoxy-D-xylulose 5-phosphate: step 4/6. Involved in the biosynthesis of isopentenyl diphosphate (IPP) and dimethylallyl diphosphate (DMAPP), two major building blocks of isoprenoid compounds. Catalyzes the conversion of 4-diphosphocytidyl-2-C-methyl-D-erythritol 2-phosphate (CDP-ME2P) to 2-C-methyl-D-erythritol 2,4-cyclodiphosphate (ME-CPP) with a corresponding release of cytidine 5-monophosphate (CMP). This is 2-C-methyl-D-erythritol 2,4-cyclodiphosphate synthase from Stutzerimonas stutzeri (strain A1501) (Pseudomonas stutzeri).